Reading from the N-terminus, the 328-residue chain is MSKNRDPLLANLNAFKSKVKSAPVIAPAKVGQKKTNDTVITIDGNTRKRTASERAQENTLNSAKNPVLVDIKKEAGSNSSNAISLDDDDDDEDFGSSPSKKVRPGSIAAAALQANQTDISKSHDSSKLLWATEYIQKKGKPVLVNELLDYLSMKKDDKVIELLKKLDRIEFDPKKGTFKYLSTYDVHSPSELLKLLRSQVTFKGISCKDLKDGWPQCDETINQLEEDSKILVLRTKKDKTPRYVWYNSGGNLKCIDEEFVKMWENVQLPQFAELPRKLQDLGLKPASVDPATIKRQTKRVEVKKKRQRKGKITNTHMTGILKDYSHRV.

A disordered region spans residues 32–105 (QKKTNDTVIT…SSPSKKVRPG (74 aa)). Ser52 carries the phosphoserine modification. The span at 85-94 (LDDDDDDEDF) shows a compositional bias: acidic residues. Residues Ser97 and Ser106 each carry the phosphoserine modification. The segment at residues 113–187 (QANQTDISKS…FKYLSTYDVH (75 aa)) is a DNA-binding region (TFIIE beta).

This sequence belongs to the TFIIE beta subunit family. TFIIE is a tetramer of two alpha (TFA1) and two beta (TFA2) subunits.

The protein localises to the nucleus. In terms of biological role, recruits TFIIH to the initiation complex and stimulates the RNA polymerase II C-terminal domain kinase and DNA-dependent ATPase activities of TFIIH. Both TFIIH and TFIIE are required for promoter clearance by RNA polymerase. The polypeptide is Transcription initiation factor IIE subunit beta (TFA2) (Saccharomyces cerevisiae (strain ATCC 204508 / S288c) (Baker's yeast)).